The chain runs to 380 residues: Zinc finger protein neuro-d4 (380 aa).

Residues 132–164 (ALLDCQKPPPGDFAHDAEGDEMEDDAPRRKNKA) are disordered. A C2H2-type zinc finger spans residues 190 to 213 (YVCDICGKRYKNRPGLSYHYTHTH). 2 consecutive PHD-type zinc fingers follow at residues 262 to 321 (EGPC…CKNC) and 318 to 368 (CKNC…CLRQ). Zn(2+)-binding residues include C265, C268, C286, C289, H294, C297, C315, C318, C321, C324, C336, C339, H344, C347, C362, and C365.

Belongs to the requiem/DPF family. Component of neuron-specific chromatin remodeling complex (nBAF complex), a subfamily of ATP-dependent SWI/SNF chromatin remodeling complexes.

Its subcellular location is the cytoplasm. It is found in the nucleus. Its function is as follows. May have an important role in developing neurons by participating in regulation of cell survival, possibly as a neurospecific transcription factor. Belongs to the neuron-specific chromatin remodeling complex (nBAF complex) and plays a role in neural development. The chain is Zinc finger protein neuro-d4 from Gallus gallus (Chicken).